Consider the following 303-residue polypeptide: THAP domain-containing protein 11 (303 aa).

Residues 6–64 (CCVPGCYNNSHRDKALHFYTFPKDAELRRLWLKNVSRAGVSGCFSTFQPTTGHRLCSVH) form a THAP-type zinc finger. 2 disordered regions span residues 85 to 132 (VNER…AQTT) and 155 to 174 (SSQA…GEDV). The span at 93-132 (RPAGAAAARRRQQQQQQQQQQQQQQQQQQPSPSASTAQTT) shows a compositional bias: low complexity. The HCFC1-binding motif (HBM) signature appears at 232-235 (DHSY). A coiled-coil region spans residues 244 to 294 (EELLRKLNEQRDILALMEVKMKEMKGSIRHLRLTEAKLREELREKDRLLAM).

Belongs to the THAP11 family. Forms homodimers. Interacts via HBM with HCFC1. Forms a complex with HCFC1 and ZNF143.

The protein resides in the nucleus. It is found in the cytoplasm. Functionally, transcription factor, which has both transcriptional activation and repression activities. Also modulates chromatin accessibility. In complex with HCFC1 and ZNF143, regulates the expression of several genes, including AP2S1, ESCO2, OPHN1, RBL1, UBXN8 and ZNF32. May regulate the expression of genes that encode both cytoplasmic and mitochondrial ribosomal proteins. Required for normal mitochondrial development and function. Regulates mitochondrial gene expression, including that of components of the electron transport chain. Involved in the maintainance of pluripotency in early embryonic cells, possibly through its action on mitochondrial maturation which is required to meet high energy demands of these cells. Required for early development of retina, preventing premature exit of retinal progenitor cells from the cell cycle. This effect may also be mediated by its action on mitochondria. Through the regulation of MMACHC gene expression, controls cobalamin metabolism. Required for normal brain development and neural precursor differentiation. Involved in cell growth. This chain is THAP domain-containing protein 11 (THAP11), found in Bos taurus (Bovine).